Consider the following 392-residue polypeptide: Succinate--CoA ligase [ADP-forming] subunit beta (392 aa).

The 239-residue stretch at 9–247 (KAILRKYGVA…VTEEDPLEVE (239 aa)) folds into the ATP-grasp domain. Residues lysine 49, 56-58 (GRG), glutamate 102, leucine 105, and glutamate 110 contribute to the ATP site. Asparagine 202 and aspartate 216 together coordinate Mg(2+). Residues asparagine 267 and 324–326 (GIL) contribute to the substrate site.

This sequence belongs to the succinate/malate CoA ligase beta subunit family. As to quaternary structure, heterotetramer of two alpha and two beta subunits. The cofactor is Mg(2+).

It carries out the reaction succinate + ATP + CoA = succinyl-CoA + ADP + phosphate. It catalyses the reaction GTP + succinate + CoA = succinyl-CoA + GDP + phosphate. Its pathway is carbohydrate metabolism; tricarboxylic acid cycle; succinate from succinyl-CoA (ligase route): step 1/1. Succinyl-CoA synthetase functions in the citric acid cycle (TCA), coupling the hydrolysis of succinyl-CoA to the synthesis of either ATP or GTP and thus represents the only step of substrate-level phosphorylation in the TCA. The beta subunit provides nucleotide specificity of the enzyme and binds the substrate succinate, while the binding sites for coenzyme A and phosphate are found in the alpha subunit. This is Succinate--CoA ligase [ADP-forming] subunit beta from Koribacter versatilis (strain Ellin345).